We begin with the raw amino-acid sequence, 173 residues long: Photosystem I assembly protein Ycf3 (173 aa).

3 TPR repeats span residues 35 to 68 (AYLY…EDNQ), 72 to 105 (GETL…NPKQ), and 120 to 153 (GRMA…YPGG).

It belongs to the Ycf3 family.

The protein resides in the cellular thylakoid membrane. Functionally, essential for the assembly of the photosystem I (PSI) complex. May act as a chaperone-like factor to guide the assembly of the PSI subunits. The polypeptide is Photosystem I assembly protein Ycf3 (Prochlorococcus marinus (strain NATL2A)).